We begin with the raw amino-acid sequence, 366 residues long: Quinolinate synthase (366 aa).

2 residues coordinate iminosuccinate: histidine 44 and serine 61. Cysteine 108 serves as a coordination point for [4Fe-4S] cluster. Iminosuccinate is bound by residues 139-141 and serine 160; that span reads YIN. Position 228 (cysteine 228) interacts with [4Fe-4S] cluster. Iminosuccinate is bound by residues 254-256 and threonine 271; that span reads HPE. Cysteine 318 lines the [4Fe-4S] cluster pocket.

It belongs to the quinolinate synthase family. Type 3 subfamily. The cofactor is [4Fe-4S] cluster.

The protein localises to the cytoplasm. It carries out the reaction iminosuccinate + dihydroxyacetone phosphate = quinolinate + phosphate + 2 H2O + H(+). It participates in cofactor biosynthesis; NAD(+) biosynthesis; quinolinate from iminoaspartate: step 1/1. Its function is as follows. Catalyzes the condensation of iminoaspartate with dihydroxyacetone phosphate to form quinolinate. The sequence is that of Quinolinate synthase from Listeria monocytogenes serovar 1/2a (strain ATCC BAA-679 / EGD-e).